A 150-amino-acid chain; its full sequence is Galactose-binding lectin (150 aa).

D-galactose is bound by residues H16 and G19. A glycan (N-linked (GlcNAc...) asparagine) is linked at N26. D-galactose is bound by residues N27, D35–H37, H64, and G67. N-linked (GlcNAc...) asparagine glycosylation is present at N74. D-galactose-binding positions include E75, D83–H85, H108, and G111. Residue N118 is glycosylated (N-linked (GlcNAc...) asparagine). D-galactose-binding positions include N119 and D127–H129.

In terms of assembly, monomer in solution. Homodimer in solution. Exists as a monomer in solution when a low concentration (0.001 mg/ml) of it is present. Homodimers start to appear at a concentration of 0.01 mg/ml and tetramers at a concentration of 0.1 mg/ml. In terms of tissue distribution, highly expressed in mantle and to a lesser extent in muscle, hepatopancreas, gill and hemocytes.

Its activity is regulated as follows. Bacterial binding activity is inhibited by D-galactose. Hemagglutinating activity is independent of divalent cations Ca2(+) or Mg2(+). It is strongly inhibited by N-acetyl-D-galactosamine (GalNAc), D-galactose and D-talose, and to a lesser extent by melibiose and raffinose. Also inhibited by glycoprotein asialo-bovine submaxillary mucin (BSM). Not inhibited by D-glucose, D-fucose, D-galactitol, N-acetyl-D-glucosamine or lactose. Fungal binding activity is inhibited by D-galactose. Cytotoxic activity against Raji cell line is completely inhibited by galactose, melibiose and raffinose, but not by glucose or lactose. Galactose inhibits binding to laminin and BSM, but not to collagen, gelatin or fibronectin. Galactose-binding lectin. Binds both alpha and beta anomer of galactose (Gal), but has a stronger interaction with the glycans having alpha Gal at the non-reducing end and binds beta Gal weakly only in highly branched glycans. Has high affinity to Galalpha1-4Galbeta1-4GlcNAc. Binds N-acetyl-2-deoxy-2-amino-galactose (2-deoxy-GalNAc). Binds N-acetylgalactosamine (GalNAc). Binds porcine stomach mucin (PSM) with high affinity. Binds galactosamine. Binds laminin, bovine submaxillary mucin (BSM), fibronectin, type I collagen and gelatin with a decreasing affinity, respectively. Has hemagglutinating activity towards human type A erythrocytes. Also hemagglutinates human type 0, B and AB erythrocytes as well as rabbit and mouse erythrocytes. Agglutinates both Gram-positive and Gram-negative bacteria including B.subtilis ATCC 6633, S.aureus ATCC 21027 and E.coli 3254, respectively. No agglutination activity towards Gram-positive S.amurskyense CMM 3673. Has bacteriostatic activity on S.amurskyense CMM 3673, B.subtilis ATCC 6633, S.aureus ATCC 21027 and E.coli 3254. However, has no agglutination nor bacteriostatic activity on Gram-negative C.scophthalmum CIP 104199 or A.troitsensis KMM 3674. Inhibits growth of fungi from the genera Aspergillus, Penicillium, Trichoderma and st. Mycelia. Inhibits germination of spores and hyphal growth of them. Has dose-dependent cytotoxic effect on the human globotriaosylceramide (Gb3)-expressing Burkitt's lymphoma (Raji) cell line. Binds to Gb3 in these cells leading to activation of caspase-9/3 and PARP. Has dose-dependent cytotoxic effect on the Gb3-expressing human MCF-7 breast cancer cell line. No cytotoxic effect on myelogenous leukemia K562 cell line, which does not express Gb3. Activates immune responses in mice and increases cytokine production of TNF-alpha, IL-6 and MCP-1 in the serum and the peritoneal lavage of mice. Induces TNF-alpha and IL-6 secretion in mouse RAW264.7 macrophages, mouse bone marrow-derived macrophages, human THP-1 macrophages, human peripheral blood mononuclear cells (PBMCs) and human blood monocyte-derived macrophages. TNF-alpha production in macrophages could not be inhibited by GalNAc, GalN or Gal, indicating that induced cytokine production is separate from its sugar binding activity. Increases intracellular reactive oxygen species levels, expression and phosphorylation of protein kinases PKC alpha/delta, expression of COX-2 and NF-kappaB, and activates the MAPK pathway by increasing the phosphorylation of ERK1/2, JNK1/2 and p38 in mouse RAW264.7 macrophages. Induces endotoxin tolerance in lipopolysaccharide(LPS)-activated macrophages by down-regulating IRAK2 expression, reducing JNK1/2 phosphorylation and NF-kappaB activation. Can slightly increase the bactericidal activity of RAW264.7 macrophages. Has DNA-binding activity. Recognizes pathogen-associated molecular patterns (PAMPs) and binds to LPS from E.coli, but has only little binding to beta-1,3-glucan from E.gracilis and peptidoglycan from S.aureus. Activates secretion of TNF-alpha and IFN-gamma by the human peripheral blood cells (HPBCs). May be involved in innate immunity acting as an antibacterial and antifungal agent involved in the recognition and clearance of pathogens. This chain is Galactose-binding lectin, found in Crenomytilus grayanus (Gray mussel).